Reading from the N-terminus, the 529-residue chain is Plexin domain-containing protein 2 (529 aa).

The N-terminal stretch at 1–30 (MARFPKADLAAAGVMLLCHFFTDQFQFADG) is a signal peptide. Residues 31 to 454 (KPGDQILDWQ…AEKKGGTLHA (424 aa)) are Extracellular-facing. The disordered stretch occupies residues 80–104 (ASVGQDSPEPRSFTDLLLDDGQDNN). Asn103 and Asn160 each carry an N-linked (GlcNAc...) asparagine glycan. The PSI domain maps to 327–372 (TCLQFNRCGPCVSSQIGFNCSWCSKLQRCSSGFDRHRQDWVDSGCP). The chain crosses the membrane as a helical span at residues 455 to 475 (GLIIGILILVLIVATAILVTV). Residues 476–529 (YMYHHPTSAASIFFIERRPSRWPAMKFRRGSGHPAYAEVEPVGEKEGFIVSEQC) lie on the Cytoplasmic side of the membrane. At Ser506 the chain carries Phosphoserine.

Belongs to the plexin family. In terms of assembly, interacts with CTTN. As to expression, expressed in the endothelial cells of the stroma but not in the endothelial cells of normal colonic tissue.

The protein localises to the membrane. In terms of biological role, may play a role in tumor angiogenesis. This is Plexin domain-containing protein 2 (PLXDC2) from Homo sapiens (Human).